The sequence spans 498 residues: ATP synthase subunit beta, chloroplastic (498 aa).

172 to 179 (GGAGVGKT) is an ATP binding site.

The protein belongs to the ATPase alpha/beta chains family. As to quaternary structure, F-type ATPases have 2 components, CF(1) - the catalytic core - and CF(0) - the membrane proton channel. CF(1) has five subunits: alpha(3), beta(3), gamma(1), delta(1), epsilon(1). CF(0) has four main subunits: a(1), b(1), b'(1) and c(9-12).

Its subcellular location is the plastid. The protein localises to the chloroplast thylakoid membrane. It catalyses the reaction ATP + H2O + 4 H(+)(in) = ADP + phosphate + 5 H(+)(out). Functionally, produces ATP from ADP in the presence of a proton gradient across the membrane. The catalytic sites are hosted primarily by the beta subunits. This Helianthus annuus (Common sunflower) protein is ATP synthase subunit beta, chloroplastic.